A 97-amino-acid chain; its full sequence is Co-chaperonin GroES (97 aa).

It belongs to the GroES chaperonin family. Heptamer of 7 subunits arranged in a ring. Interacts with the chaperonin GroEL.

The protein localises to the cytoplasm. Functionally, together with the chaperonin GroEL, plays an essential role in assisting protein folding. The GroEL-GroES system forms a nano-cage that allows encapsulation of the non-native substrate proteins and provides a physical environment optimized to promote and accelerate protein folding. GroES binds to the apical surface of the GroEL ring, thereby capping the opening of the GroEL channel. The polypeptide is Co-chaperonin GroES (Pectobacterium atrosepticum (strain SCRI 1043 / ATCC BAA-672) (Erwinia carotovora subsp. atroseptica)).